Here is a 236-residue protein sequence, read N- to C-terminus: Ureidoacrylate amidohydrolase RutB (236 aa).

D24 serves as the catalytic Proton acceptor. Residue K133 is part of the active site. C166 serves as the catalytic Nucleophile.

The protein belongs to the isochorismatase family. RutB subfamily.

It carries out the reaction (Z)-3-ureidoacrylate + H2O + H(+) = (Z)-3-aminoacrylate + NH4(+) + CO2. The catalysed reaction is (Z)-3-ureidoacrylate + H2O = (Z)-3-aminoacrylate + carbamate + H(+). The enzyme catalyses (Z)-2-methylureidoacrylate + H2O + H(+) = (Z)-2-methylaminoacrylate + NH4(+) + CO2. Its function is as follows. Hydrolyzes ureidoacrylate to form aminoacrylate and carbamate. The carbamate hydrolyzes spontaneously, thereby releasing one of the nitrogen atoms of the pyrimidine ring as ammonia and one of its carbon atoms as CO2. This Klebsiella pneumoniae (strain 342) protein is Ureidoacrylate amidohydrolase RutB.